A 231-amino-acid chain; its full sequence is 26S proteasome non-ATPase regulatory subunit 10 (231 aa).

ANK repeat units follow at residues 3 to 36 (GCVS…ATRT), 37 to 69 (DQDS…VNDK), 70 to 102 (DDAG…VNAV), 103 to 135 (NQNG…PDAK), 136 to 168 (DHYD…TNIQ), 169 to 201 (DTEG…IYIE), and 202 to 226 (NKEE…LAES).

In terms of assembly, part of transient complex containing PSMD10, PSMC4, PSMC5 and PAAF1 formed during the assembly of the 26S proteasome. Stays associated throughout the assembly of the PA700/19S RC and is released upon association with the 20S core. Interacts with PSMC4. Interacts with RB1. Interacts with CDK4. Interacts with MDM2. Interacts with RELA. Associates with a CDK4:CCND2 serine/threonine kinase complex. Interacts with ARHGDIA and increases the interaction between ARHGDIA and RHOA, hence promotes ARHGDIA inactivation of RHOA and ROCK.

It localises to the cytoplasm. Its subcellular location is the nucleus. Its function is as follows. Acts as a chaperone during the assembly of the 26S proteasome, specifically of the PA700/19S regulatory complex (RC). In the initial step of the base subcomplex assembly is part of an intermediate PSMD10:PSMC4:PSMC5:PAAF1 module which probably assembles with a PSMD5:PSMC2:PSMC1:PSMD2 module. Independently of the proteasome, regulates EGF-induced AKT activation through inhibition of the RHOA/ROCK/PTEN pathway, leading to prolonged AKT activation. Plays an important role in RAS-induced tumorigenesis. Functionally, acts as an oncoprotein by being involved in negative regulation of tumor suppressors RB1 and p53/TP53. Overexpression is leading to phosphorylation of RB1 and proteasomal degradation of RB1. Regulates CDK4-mediated phosphorylation of RB1 by competing with CDKN2A for binding with CDK4. Facilitates binding of MDM2 to p53/TP53 and the mono- and polyubiquitination of p53/TP53 by MDM2 suggesting a function in targeting the TP53:MDM2 complex to the 26S proteasome. Involved in p53-independent apoptosis. Involved in regulation of NF-kappa-B by retaining it in the cytoplasm. Binds to the NF-kappa-B component RELA and accelerates its XPO1/CRM1-mediated nuclear export. The sequence is that of 26S proteasome non-ATPase regulatory subunit 10 (Psmd10) from Mus musculus (Mouse).